Reading from the N-terminus, the 772-residue chain is MRLSSLLALLRPALPLILGLSLGCSLSLLRVSWIQGEGEDPCVEAVGERGGPQNPDSRARLDQSDEDFKPRIVPYYRDPNKPYKKVLRTRYIQTELGSRERLLVAVLTSRATLSTLAVAVNRTVAHHFPRLLYFTGQRGARAPAGMQVVSHGDERPAWLMSETLRHLHTHFGADYDWFFIMQDDTYVQAPRLAALAGHLSINQDLYLGRAEEFIGAGEQARYCHGGFGYLLSRSLLLRLRPHLDGCRGDILSARPDEWLGRCLIDSLGVGCVSQHQGQQYRSFELAKNRDPEKEGSSAFLSAFAVHPVSEGTLMYRLHKRFSALELERAYSEIEQLQAQIRNLTVLTPEGEAGLSWPVGLPAPFTPHSRFEVLGWDYFTEQHTFSCADGAPKCPLQGASRADVGDALETALEQLNRRYQPRLRFQKQRLLNGYRRFDPARGMEYTLDLLLECVTQRGHRRALARRVSLLRPLSRVEILPMPYVTEATRVQLVLPLLVAEAAAAPAFLEAFAANVLEPREHALLTLLLVYGPREGGRGAPDPFLGVKAAAAELERRYPGTRLAWLAVRAEAPSQVRLMDVVSKKHPVDTLFFLTTVWTRPGPEVLNRCRMNAISGWQAFFPVHFQEFNPALSPQRSPPGPPGAGPDPPSPPGADPSRGAPIGGRFDRQASAEGCFYNADYLAARARLAGELAGQEEEEALEGLEVMDVFLRFSGLHLFRAVEPGLVQKFSLRDCSPRLSEELYHRCRLSNLEGLGGRAQLAMALFEQEQANST.

Topologically, residues 1-6 (MRLSSL) are cytoplasmic. The chain crosses the membrane as a helical; Signal-anchor for type II membrane protein span at residues 7–29 (LALLRPALPLILGLSLGCSLSLL). Topologically, residues 30 to 772 (RVSWIQGEGE…LFEQEQANST (743 aa)) are lumenal. Residues Asn-121 and Asn-342 are each glycosylated (N-linked (GlcNAc...) asparagine). The tract at residues 629–662 (ALSPQRSPPGPPGAGPDPPSPPGADPSRGAPIGG) is disordered. The span at 634-652 (RSPPGPPGAGPDPPSPPGA) shows a compositional bias: pro residues.

Belongs to the chondroitin N-acetylgalactosaminyltransferase family. Ubiquitous. Highly expressed in placenta, small intestine and pancreas.

It localises to the golgi apparatus. The protein localises to the golgi stack membrane. It catalyses the reaction 3-O-(beta-D-GalNAc-(1-&gt;4)-beta-D-GlcA-(1-&gt;3)-beta-D-Gal-(1-&gt;3)-beta-D-Gal-(1-&gt;4)-beta-D-Xyl)-L-seryl-[protein] + UDP-alpha-D-glucuronate = 3-O-(beta-D-GlcA-(1-&gt;3)-beta-D-GalNAc-(1-&gt;4)-beta-D-GlcA-(1-&gt;3)-beta-D-Gal-(1-&gt;3)-beta-D-Gal-(1-&gt;4)-beta-D-Xyl)-L-seryl-[protein] + UDP + H(+). It carries out the reaction 3-O-{[beta-D-GalNAc-(1-&gt;4)-beta-D-GlcA-(1-&gt;3)](n)-beta-D-GalNAc-(1-&gt;4)-beta-D-GlcA-(1-&gt;3)-beta-D-Gal-(1-&gt;3)-beta-D-Gal-(1-&gt;4)-beta-D-Xyl}-L-seryl-[protein] + UDP-alpha-D-glucuronate = 3-O-{beta-D-GlcA-(1-&gt;3)-[beta-D-GalNAc-(1-&gt;4)-beta-D-GlcA-(1-&gt;3)](n)-beta-D-GalNAc-(1-&gt;4)-beta-D-GlcA-(1-&gt;3)-beta-D-Gal-(1-&gt;3)-beta-D-Gal-(1-&gt;4)-beta-D-Xyl}-L-seryl-[protein] + UDP + H(+). Functionally, transfers glucuronic acid (GlcUA) from UDP-GlcUA to N-acetylgalactosamine residues on the non-reducing end of the elongating chondroitin polymer. Has no N-acetylgalactosaminyltransferase activity. In Homo sapiens (Human), this protein is Chondroitin sulfate glucuronyltransferase (CHPF2).